The primary structure comprises 428 residues: Putative FBD-associated F-box protein At5g56390 (428 aa).

One can recognise an F-box domain in the interval D2–S50. An FBD domain is found at C344 to S394.

In Arabidopsis thaliana (Mouse-ear cress), this protein is Putative FBD-associated F-box protein At5g56390.